A 68-amino-acid chain; its full sequence is SERF-like protein YDL085C-A (68 aa).

2 stretches are compositionally biased toward basic and acidic residues: residues 1–43 and 50–68; these read MARG…EILR and DARREAEKLEKLKAEKTRR. The segment at 1–68 is disordered; it reads MARGNQRDLA…EKLKAEKTRR (68 aa). A Phosphoserine modification is found at Ser37.

The protein belongs to the SERF family.

The protein localises to the cytoplasm. The protein resides in the nucleus. This Saccharomyces cerevisiae (strain ATCC 204508 / S288c) (Baker's yeast) protein is SERF-like protein YDL085C-A.